The following is a 130-amino-acid chain: Small ribosomal subunit protein uS9 (130 aa).

It belongs to the universal ribosomal protein uS9 family.

This is Small ribosomal subunit protein uS9 from Paraburkholderia phytofirmans (strain DSM 17436 / LMG 22146 / PsJN) (Burkholderia phytofirmans).